Here is a 545-residue protein sequence, read N- to C-terminus: Methionine--tRNA ligase (545 aa).

A 'HIGH' region motif is present at residues 10 to 20 (PYANGSLHIGH). Zn(2+) contacts are provided by Cys-141, Cys-144, Cys-153, and Cys-156. Residues 329–333 (KISTS) carry the 'KMSKS' region motif. An ATP-binding site is contributed by Thr-332.

Belongs to the class-I aminoacyl-tRNA synthetase family. MetG type 1 subfamily. In terms of assembly, monomer. Requires Zn(2+) as cofactor.

It is found in the cytoplasm. The enzyme catalyses tRNA(Met) + L-methionine + ATP = L-methionyl-tRNA(Met) + AMP + diphosphate. In terms of biological role, is required not only for elongation of protein synthesis but also for the initiation of all mRNA translation through initiator tRNA(fMet) aminoacylation. This Streptococcus pneumoniae (strain 70585) protein is Methionine--tRNA ligase.